A 387-amino-acid chain; its full sequence is 3-dehydroquinate synthase (387 aa).

This sequence belongs to the archaeal-type DHQ synthase family.

It catalyses the reaction 2-amino-2,3,7-trideoxy-D-lyxo-hept-6-ulosonate + NAD(+) + H2O = 3-dehydroquinate + NH4(+) + NADH + H(+). In terms of biological role, catalyzes the oxidative deamination and cyclization of 2-amino-3,7-dideoxy-D-threo-hept-6-ulosonic acid (ADH) to yield 3-dehydroquinate (DHQ), which is fed into the canonical shikimic pathway of aromatic amino acid biosynthesis. The sequence is that of 3-dehydroquinate synthase from Halobacterium salinarum (strain ATCC 29341 / DSM 671 / R1).